We begin with the raw amino-acid sequence, 223 residues long: Small ribosomal subunit protein uS3 (223 aa).

In terms of domain architecture, KH type-2 spans 39–108 (IRNFVKKNSY…NILINIVEVK (70 aa)).

The protein belongs to the universal ribosomal protein uS3 family. Part of the 30S ribosomal subunit. Forms a tight complex with proteins S10 and S14.

Its function is as follows. Binds the lower part of the 30S subunit head. Binds mRNA in the 70S ribosome, positioning it for translation. This Clostridium botulinum (strain 657 / Type Ba4) protein is Small ribosomal subunit protein uS3.